Here is a 322-residue protein sequence, read N- to C-terminus: 4-hydroxythreonine-4-phosphate dehydrogenase (322 aa).

Thr-132 contacts substrate. Positions 160, 205, and 260 each coordinate a divalent metal cation. Residues Lys-268, Asn-277, and Arg-286 each coordinate substrate.

It belongs to the PdxA family. Homodimer. Zn(2+) is required as a cofactor. Requires Mg(2+) as cofactor. Co(2+) serves as cofactor.

Its subcellular location is the cytoplasm. It catalyses the reaction 4-(phosphooxy)-L-threonine + NAD(+) = 3-amino-2-oxopropyl phosphate + CO2 + NADH. It participates in cofactor biosynthesis; pyridoxine 5'-phosphate biosynthesis; pyridoxine 5'-phosphate from D-erythrose 4-phosphate: step 4/5. Catalyzes the NAD(P)-dependent oxidation of 4-(phosphooxy)-L-threonine (HTP) into 2-amino-3-oxo-4-(phosphooxy)butyric acid which spontaneously decarboxylates to form 3-amino-2-oxopropyl phosphate (AHAP). This chain is 4-hydroxythreonine-4-phosphate dehydrogenase, found in Xanthomonas campestris pv. campestris (strain 8004).